The following is a 104-amino-acid chain: Large ribosomal subunit protein uL24 (104 aa).

The tract at residues 82 to 104 (RVGYRFDENGKKVRVSRRNGKDI) is disordered. A compositionally biased stretch (basic residues) spans 93-104 (KVRVSRRNGKDI).

The protein belongs to the universal ribosomal protein uL24 family. In terms of assembly, part of the 50S ribosomal subunit.

Its function is as follows. One of two assembly initiator proteins, it binds directly to the 5'-end of the 23S rRNA, where it nucleates assembly of the 50S subunit. One of the proteins that surrounds the polypeptide exit tunnel on the outside of the subunit. This is Large ribosomal subunit protein uL24 from Corynebacterium glutamicum (strain R).